The primary structure comprises 316 residues: Ribosomal RNA small subunit methyltransferase H (316 aa).

S-adenosyl-L-methionine contacts are provided by residues Gly-35–His-37, Asp-55, Phe-79, Asp-101, and Gln-108.

It belongs to the methyltransferase superfamily. RsmH family.

The protein resides in the cytoplasm. It catalyses the reaction cytidine(1402) in 16S rRNA + S-adenosyl-L-methionine = N(4)-methylcytidine(1402) in 16S rRNA + S-adenosyl-L-homocysteine + H(+). Specifically methylates the N4 position of cytidine in position 1402 (C1402) of 16S rRNA. This is Ribosomal RNA small subunit methyltransferase H from Vibrio vulnificus (strain CMCP6).